The following is a 205-amino-acid chain: NADH dehydrogenase (205 aa).

Residues Arg-17–Arg-21, Gln-73, Leu-158–Gly-159, and Arg-195 contribute to the FMN site.

The protein belongs to the nitroreductase family. In terms of assembly, homodimer. FMN is required as a cofactor.

It carries out the reaction a ubiquinone + NADH + 5 H(+)(in) = a ubiquinol + NAD(+) + 4 H(+)(out). Its function is as follows. Can oxidize either NADH or NADPH with a preference for NADH. Can catalyze electron transfer from NADH to various electron acceptors which include, in addition to molecular oxygen, cytochrome c, 2,6 dichlorphenolindophenol, methylene blue, ferricyanide or P-nitroblue tetrazolium. The polypeptide is NADH dehydrogenase (nox) (Thermus thermophilus (strain ATCC 27634 / DSM 579 / HB8)).